A 209-amino-acid polypeptide reads, in one-letter code: 3-demethoxyubiquinol 3-hydroxylase (209 aa).

Residues Glu-58, Glu-88, His-91, Glu-140, Glu-172, and His-175 each coordinate Fe cation.

The protein belongs to the COQ7 family. The cofactor is Fe cation.

Its subcellular location is the cell membrane. The catalysed reaction is a 5-methoxy-2-methyl-3-(all-trans-polyprenyl)benzene-1,4-diol + AH2 + O2 = a 3-demethylubiquinol + A + H2O. The protein operates within cofactor biosynthesis; ubiquinone biosynthesis. Its function is as follows. Catalyzes the hydroxylation of 2-nonaprenyl-3-methyl-6-methoxy-1,4-benzoquinol during ubiquinone biosynthesis. The protein is 3-demethoxyubiquinol 3-hydroxylase of Polynucleobacter necessarius subsp. necessarius (strain STIR1).